The chain runs to 514 residues: CENP-B homolog protein 2 (514 aa).

The HTH CENPB-type domain maps to 70–145; it reads QIRRNRQGKY…KKRCLKHGLK (76 aa). The 213-residue stretch at 172–384 folds into the DDE-1 domain; that stretch reads FDPKDIFNMD…FEPSIIYNCF (213 aa).

It localises to the nucleus. It is found in the chromosome. Its subcellular location is the centromere. Functionally, binds to the central core and core-associated repeat regions of centromeric heterochromatin. This is CENP-B homolog protein 2 (cbh2) from Schizosaccharomyces pombe (strain 972 / ATCC 24843) (Fission yeast).